A 91-amino-acid chain; its full sequence is DNA-binding protein HU-beta 2 (91 aa).

It belongs to the bacterial histone-like protein family.

Histone-like DNA-binding protein which is capable of wrapping DNA to stabilize it, and thus to prevent its denaturation under extreme environmental conditions. The polypeptide is DNA-binding protein HU-beta 2 (hupB2) (Neisseria meningitidis serogroup A / serotype 4A (strain DSM 15465 / Z2491)).